Reading from the N-terminus, the 131-residue chain is T3C protein (131 aa).

In Ovis aries (Sheep), this protein is T3C protein.